The chain runs to 269 residues: Tryptophan synthase alpha chain (269 aa).

Active-site proton acceptor residues include Glu49 and Asp60.

This sequence belongs to the TrpA family. In terms of assembly, tetramer of two alpha and two beta chains.

It catalyses the reaction (1S,2R)-1-C-(indol-3-yl)glycerol 3-phosphate + L-serine = D-glyceraldehyde 3-phosphate + L-tryptophan + H2O. Its pathway is amino-acid biosynthesis; L-tryptophan biosynthesis; L-tryptophan from chorismate: step 5/5. The alpha subunit is responsible for the aldol cleavage of indoleglycerol phosphate to indole and glyceraldehyde 3-phosphate. In Enterobacter sp. (strain 638), this protein is Tryptophan synthase alpha chain.